The sequence spans 1022 residues: Probable beta-galactosidase B (1022 aa).

The first 20 residues, 1–20, serve as a signal peptide directing secretion; it reads MARFPQLLFLLLASIGLLSA. N23 is a glycosylation site (N-linked (GlcNAc...) asparagine). Y90 provides a ligand contact to substrate. A glycan (N-linked (GlcNAc...) asparagine) is linked at N100. Substrate is bound by residues N135, A136, E137, and N195. Catalysis depends on E196, which acts as the Proton donor. A glycan (N-linked (GlcNAc...) asparagine) is linked at N211. Y265 is a substrate binding site. C271 and C324 are oxidised to a cystine. E308 functions as the Nucleophile in the catalytic mechanism. Substrate is bound at residue Y373. N-linked (GlcNAc...) asparagine glycosylation is found at N411, N456, N541, N554, N626, N777, N790, N832, N880, and N881.

It belongs to the glycosyl hydrolase 35 family.

The protein resides in the secreted. The catalysed reaction is Hydrolysis of terminal non-reducing beta-D-galactose residues in beta-D-galactosides.. In terms of biological role, cleaves beta-linked terminal galactosyl residues from gangliosides, glycoproteins, and glycosaminoglycans. The sequence is that of Probable beta-galactosidase B (lacB) from Aspergillus terreus (strain NIH 2624 / FGSC A1156).